The sequence spans 222 residues: Pre-mRNA cleavage factor Im 25 kDa subunit 1 (222 aa).

In terms of domain architecture, Nudix hydrolase spans 67–194 (GLRTCVEAVL…KLLAVPLCQL (128 aa)). The tract at residues 94–96 (SIF) is interaction with RNA. Positions 101–122 (GRLRPGESDIEGLKRKLASKLS) match the Nudix box motif.

The protein belongs to the Nudix hydrolase family. CPSF5 subfamily. As to quaternary structure, homodimer. Component of the cleavage factor Im (CFIm) complex. Forms a complex with cleavage and polyadenylation specificity factor (CPSF) subunits FIPS5.

It is found in the nucleus. Its function is as follows. Component of the cleavage factor Im (CFIm) complex that plays a key role in pre-mRNA 3'-processing. Involved in association with CPSF6 or CPSF7 in pre-MRNA 3'-end poly(A) site cleavage and poly(A) addition. NUDT21/CPSF5 binds to cleavage and polyadenylation RNA substrates. The homodimer mediates simultaneous sequence-specific recognition of two 5'-UGUA-3' elements within the pre-mRNA. Binds to, but does not hydrolyze mono- and di-adenosine nucleotides. May have a role in mRNA export. The polypeptide is Pre-mRNA cleavage factor Im 25 kDa subunit 1 (Arabidopsis thaliana (Mouse-ear cress)).